The chain runs to 309 residues: Probable cell division protein WhiA (309 aa).

A DNA-binding region (H-T-H motif) is located at residues 275-309; sequence SLKELGELVPGGPISKSGINHRLRKINQYAEKLRA.

Belongs to the WhiA family.

In terms of biological role, involved in cell division and chromosome segregation. The polypeptide is Probable cell division protein WhiA (Pediococcus pentosaceus (strain ATCC 25745 / CCUG 21536 / LMG 10740 / 183-1w)).